The chain runs to 285 residues: Inositol oxygenase (285 aa).

Arg29 serves as a coordination point for substrate. Position 33 is a phosphoserine (Ser33). 85–87 (DES) contributes to the substrate binding site. Fe cation-binding residues include His98, His123, and Asp124. Substrate-binding positions include Lys127 and 141–142 (GD). His194, His220, and Asp253 together coordinate Fe cation. 220 to 221 (HS) is a substrate binding site.

It belongs to the myo-inositol oxygenase family. Fe cation serves as cofactor. As to expression, kidney specific.

The protein resides in the cytoplasm. It carries out the reaction myo-inositol + O2 = D-glucuronate + H2O + H(+). Its pathway is polyol metabolism; myo-inositol degradation into D-glucuronate; D-glucuronate from myo-inositol: step 1/1. This is Inositol oxygenase (MIOX) from Homo sapiens (Human).